Reading from the N-terminus, the 1166-residue chain is Poly [ADP-ribose] polymerase tankyrase-2 (1166 aa).

ANK repeat units lie at residues 57 to 89 (RKST…ARDD), 90 to 122 (GGLI…ARDN), and 123 to 155 (WNYT…IRNT). Asn203 carries the (3S)-3-hydroxyasparagine; by HIF1AN; partial modification. ANK repeat units follow at residues 210–242 (RKST…AKDK), 243–275 (GDLV…AMDL), 276–308 (WQFT…LLNC), 363–398 (THET…EKTK), 399–431 (EFLT…ALDN), and 432–464 (LGQT…IISL). Residue His238 is modified to (3S)-3-hydroxyhistidine; by HIF1AN; partial. Asn271 is subject to (3S)-3-hydroxyasparagine; by HIF1AN; partial. Asn427 is modified ((3S)-3-hydroxyasparagine; by HIF1AN; partial). At Asn518 the chain carries (3S)-3-hydroxyasparagine; by HIF1AN; partial. ANK repeat units follow at residues 525-557 (RQST…AKDK), 558-590 (GGLV…VADL), and 591-623 (WKFT…KKNR). The HIF1AN-binding stretch occupies residues 545–553 (LLQHGADVH). The residue at position 553 (His553) is a (3S)-3-hydroxyhistidine; by HIF1AN; partial. (3S)-3-hydroxyasparagine; by HIF1AN; partial is present on Asn586. 3 positions are modified to (3S)-3-hydroxyasparagine; by HIF1AN; partial: Asn671, Asn706, and Asn739. ANK repeat units follow at residues 678–710 (RHST…AQDK), 711–743 (GGLI…ATDK), and 744–776 (WAFT…LKNQ). Positions 819–839 (GATADALSSGPSSPSSLSAAS) are disordered. Residues 822 to 839 (ADALSSGPSSPSSLSAAS) show a composition bias toward low complexity. In terms of domain architecture, SAM spans 873–936 (GVDFSITQFV…IKGVERLISG (64 aa)). The region spanning 959–1164 (SPDDKEFQSV…YQIMRPEGMV (206 aa)) is the PARP catalytic domain. Zn(2+)-binding residues include Cys1081, His1084, Cys1089, and Cys1092.

This sequence belongs to the ARTD/PARP family. In terms of assembly, oligomerizes and associates with TNKS. Interacts with the cytoplasmic domain of LNPEP/Otase in SLC2A4/GLUT4-vesicles. Binds to the N-terminus of Grb14 and TRF1 with its ankyrin repeat region. Interacts with HIF1AN. Interacts with RNF146; this interaction leads to ubiquitination and proteasomal degradation. Interacts with NUMA1. Ubiquitinated at 'Lys-48' and 'Lys-63' by RNF146 when auto-poly-ADP-ribosylated; this leads to degradation. Deubiquitinated by USP25; leading to stabilization. Post-translationally, ADP-ribosylated (-auto). Poly-ADP-ribosylated protein is recognized by RNF146, followed by ubiquitination. In terms of processing, the crystallographic evidence suggests that the 3-hydroxyhistidine may be the (3S) stereoisomer. Highly expressed in placenta, skeletal muscle, liver, brain, kidney, heart, thymus, spinal cord, lung, peripheral blood leukocytes, pancreas, lymph nodes, spleen, prostate, testis, ovary, small intestine, colon, mammary gland, breast and breast carcinoma, and in common-type meningioma. Highly expressed in fetal liver, heart and brain.

The protein localises to the cytoplasm. It is found in the golgi apparatus membrane. The protein resides in the nucleus. Its subcellular location is the chromosome. It localises to the telomere. It catalyses the reaction NAD(+) + (ADP-D-ribosyl)n-acceptor = nicotinamide + (ADP-D-ribosyl)n+1-acceptor + H(+).. It carries out the reaction L-aspartyl-[protein] + NAD(+) = 4-O-(ADP-D-ribosyl)-L-aspartyl-[protein] + nicotinamide. The catalysed reaction is L-glutamyl-[protein] + NAD(+) = 5-O-(ADP-D-ribosyl)-L-glutamyl-[protein] + nicotinamide. Specifically inhibited by XAV939, a small molecule, leading to inhibit the Wnt signaling pathway by stabilizing AXIN1 and AXIN2. Inhibited by talazoparib. Functionally, poly-ADP-ribosyltransferase involved in various processes such as Wnt signaling pathway, telomere length and vesicle trafficking. Acts as an activator of the Wnt signaling pathway by mediating poly-ADP-ribosylation of AXIN1 and AXIN2, 2 key components of the beta-catenin destruction complex: poly-ADP-ribosylated target proteins are recognized by RNF146, which mediates their ubiquitination and subsequent degradation. Also mediates poly-ADP-ribosylation of BLZF1 and CASC3, followed by recruitment of RNF146 and subsequent ubiquitination. Mediates poly-ADP-ribosylation of TERF1, thereby contributing to the regulation of telomere length. Stimulates 26S proteasome activity. The protein is Poly [ADP-ribose] polymerase tankyrase-2 of Homo sapiens (Human).